Consider the following 403-residue polypeptide: 4-hydroxy-3-methylbut-2-en-1-yl diphosphate synthase (ferredoxin) (403 aa).

Residues Cys-312, Cys-315, Cys-346, and Glu-353 each coordinate [4Fe-4S] cluster.

This sequence belongs to the IspG family. It depends on [4Fe-4S] cluster as a cofactor.

The enzyme catalyses (2E)-4-hydroxy-3-methylbut-2-enyl diphosphate + 2 oxidized [2Fe-2S]-[ferredoxin] + H2O = 2-C-methyl-D-erythritol 2,4-cyclic diphosphate + 2 reduced [2Fe-2S]-[ferredoxin] + H(+). The protein operates within isoprenoid biosynthesis; isopentenyl diphosphate biosynthesis via DXP pathway; isopentenyl diphosphate from 1-deoxy-D-xylulose 5-phosphate: step 5/6. Converts 2C-methyl-D-erythritol 2,4-cyclodiphosphate (ME-2,4cPP) into 1-hydroxy-2-methyl-2-(E)-butenyl 4-diphosphate. The protein is 4-hydroxy-3-methylbut-2-en-1-yl diphosphate synthase (ferredoxin) of Synechocystis sp. (strain ATCC 27184 / PCC 6803 / Kazusa).